The following is a 347-amino-acid chain: Probable inactive UDP-arabinopyranose mutase 2 (347 aa).

Arg-145 carries an N-linked (Glc...) arginine glycan.

Belongs to the RGP family. Heteromers with UAM1 and UAM3. In terms of processing, is not reversibly glycosylated in vitro by UDP-glucose, UDP-xylose and UDP-galactose.

It localises to the golgi apparatus. In terms of biological role, probable inactive UDP-L-arabinose mutase. Inactive in vitro, but associates with UAM1 and UAM3. This Oryza sativa subsp. japonica (Rice) protein is Probable inactive UDP-arabinopyranose mutase 2.